A 174-amino-acid chain; its full sequence is Repair DNA polymerase X (174 aa).

The tract at residues 42–51 (REEKMLNDVD) is involved in ssDNA binding. Positions 49 and 51 each coordinate Mg(2+). Cys-81 and Cys-86 form a disulfide bridge. A Mg(2+)-binding site is contributed by Asp-100.

This sequence belongs to the DNA polymerase type-X family. It depends on Mg(2+) as a cofactor.

The protein resides in the virion. The catalysed reaction is DNA(n) + a 2'-deoxyribonucleoside 5'-triphosphate = DNA(n+1) + diphosphate. Error-prone polymerase lacking a proofreading 3'-5' exonuclease which catalyzes the gap-filling reaction during the DNA repair process. Specifically binds intermediates in the single-nucleotide base-excision repair process. Also catalyzes DNA polymerization with low nucleotide-insertion fidelity. Probably acts as a strategic DNA mutase, which gives rise to a rapid emergence of variants. Generates mismatched G-G pairs, in that case, the polymerase first binds the deoxynucleotide followed by mismatch formation. Together with the viral DNA ligase, fills the single nucleotide gaps generated by the AP endonuclease. Binds DNA with high affinity via the helix alphaE. The polypeptide is Repair DNA polymerase X (Ornithodoros (relapsing fever ticks)).